The following is a 406-amino-acid chain: Bifunctional enzyme IspD/IspF (406 aa).

The 2-C-methyl-D-erythritol 4-phosphate cytidylyltransferase stretch occupies residues 1–246; that stretch reads MLQMPSKQPI…KLSASLLPDV (246 aa). The tract at residues 247 to 406 is 2-C-methyl-D-erythritol 2,4-cyclodiphosphate synthase; that stretch reads RTGNGYDVHQ…ATVVYRGVKR (160 aa). 2 residues coordinate a divalent metal cation: D253 and H255. 4-CDP-2-C-methyl-D-erythritol 2-phosphate-binding positions include 253-255 and 279-280; these read DVH and HS. H287 provides a ligand contact to a divalent metal cation. Residues 301–303, 377–380, F384, and R387 contribute to the 4-CDP-2-C-methyl-D-erythritol 2-phosphate site; these read DIG and TTNE.

This sequence in the N-terminal section; belongs to the IspD/TarI cytidylyltransferase family. IspD subfamily. It in the C-terminal section; belongs to the IspF family. The cofactor is a divalent metal cation.

It carries out the reaction 2-C-methyl-D-erythritol 4-phosphate + CTP + H(+) = 4-CDP-2-C-methyl-D-erythritol + diphosphate. The catalysed reaction is 4-CDP-2-C-methyl-D-erythritol 2-phosphate = 2-C-methyl-D-erythritol 2,4-cyclic diphosphate + CMP. It functions in the pathway isoprenoid biosynthesis; isopentenyl diphosphate biosynthesis via DXP pathway; isopentenyl diphosphate from 1-deoxy-D-xylulose 5-phosphate: step 2/6. The protein operates within isoprenoid biosynthesis; isopentenyl diphosphate biosynthesis via DXP pathway; isopentenyl diphosphate from 1-deoxy-D-xylulose 5-phosphate: step 4/6. In terms of biological role, bifunctional enzyme that catalyzes the formation of 4-diphosphocytidyl-2-C-methyl-D-erythritol from CTP and 2-C-methyl-D-erythritol 4-phosphate (MEP) (IspD), and catalyzes the conversion of 4-diphosphocytidyl-2-C-methyl-D-erythritol 2-phosphate (CDP-ME2P) to 2-C-methyl-D-erythritol 2,4-cyclodiphosphate (ME-CPP) with a corresponding release of cytidine 5-monophosphate (CMP) (IspF). The sequence is that of Bifunctional enzyme IspD/IspF from Rhizobium leguminosarum bv. trifolii (strain WSM2304).